We begin with the raw amino-acid sequence, 287 residues long: ATP synthase gamma chain (287 aa).

It belongs to the ATPase gamma chain family. As to quaternary structure, F-type ATPases have 2 components, CF(1) - the catalytic core - and CF(0) - the membrane proton channel. CF(1) has five subunits: alpha(3), beta(3), gamma(1), delta(1), epsilon(1). CF(0) has three main subunits: a, b and c.

The protein localises to the cell inner membrane. Functionally, produces ATP from ADP in the presence of a proton gradient across the membrane. The gamma chain is believed to be important in regulating ATPase activity and the flow of protons through the CF(0) complex. This Geobacter metallireducens (strain ATCC 53774 / DSM 7210 / GS-15) protein is ATP synthase gamma chain.